The sequence spans 388 residues: tRNA (guanine-N(7)-)-methyltransferase non-catalytic subunit (388 aa).

4 WD repeats span residues 58-102 (VEKR…KGDI), 112-151 (VVPK…AIEM), 153-194 (GAIS…DSFF), and 196-234 (GHTE…APRR). Residues 365–388 (EKKKRRLNEDINGDDGEGPGPSNS) form a disordered region.

Belongs to the WD repeat TRM82 family. Forms a heterodimer with the catalytic subunit.

It localises to the nucleus. It functions in the pathway tRNA modification; N(7)-methylguanine-tRNA biosynthesis. Required for the formation of N(7)-methylguanine at position 46 (m7G46) in tRNA. In the complex, it is required to stabilize and induce conformational changes of the catalytic subunit. This is tRNA (guanine-N(7)-)-methyltransferase non-catalytic subunit from Caenorhabditis elegans.